The chain runs to 62 residues: Alpha-conotoxin-like S1.1 (62 aa).

Positions 1–21 are cleaved as a signal peptide; sequence MGMRMMFTVFLLVVLAITVVS. Residues 22–48 constitute a propeptide that is removed on maturation; that stretch reads FPLDRESDGANAEARTHDHEKHALDRN. Disulfide bonds link C50–C56 and C51–C61. C61 is subject to Cysteine amide.

Belongs to the conotoxin A superfamily. As to expression, expressed by the venom duct.

The protein localises to the secreted. Its function is as follows. Alpha-conotoxins act on postsynaptic membranes, they bind to the nicotinic acetylcholine receptors (nAChR) and thus inhibit them. The sequence is that of Alpha-conotoxin-like S1.1 from Conus striatus (Striated cone).